The sequence spans 280 residues: tRNA pseudouridine synthase A (280 aa).

The active-site Nucleophile is the aspartate 55. Position 110 (tyrosine 110) interacts with substrate.

This sequence belongs to the tRNA pseudouridine synthase TruA family.

The catalysed reaction is uridine(38/39/40) in tRNA = pseudouridine(38/39/40) in tRNA. In terms of biological role, formation of pseudouridine at positions 38, 39 and 40 in the anticodon stem and loop of transfer RNAs. The protein is tRNA pseudouridine synthase A of Methanosphaerula palustris (strain ATCC BAA-1556 / DSM 19958 / E1-9c).